We begin with the raw amino-acid sequence, 1107 residues long: Unconventional myosin-Ib (1107 aa).

The region spanning 15–701 (IGVGDMVLLE…TLFQLEDLRK (687 aa)) is the Myosin motor domain. Ser60 is modified (phosphoserine). 108 to 115 (GESGAGKT) contributes to the ATP binding site. A Glycyl lysine isopeptide (Lys-Gly) (interchain with G-Cter in SUMO1); alternate cross-link involves residue Lys287. Lys287 participates in a covalent cross-link: Glycyl lysine isopeptide (Lys-Gly) (interchain with G-Cter in SUMO2); alternate. The interval 592-599 (YIRCIKPN) is actin-binding. 5 consecutive IQ domains span residues 704 to 727 (LEDLATLIQKIYRGWKCRTHFLLM), 728 to 749 (KRSQVVIAAWYRRYAQQKRYQQ), 750 to 778 (IKSSALVIQSYIRGWKARKILRELKHQKR), 780 to 807 (KEAATTIAAYWHGTQARRELKRLKEEAR), and 808 to 837 (RKHAVAVIWAYWLGLKVRREYRKFFRANAG). Positions 923–1107 (KALYPSSVGQ…NNRLLEVAVP (185 aa)) constitute a TH1 domain.

It belongs to the TRAFAC class myosin-kinesin ATPase superfamily. Myosin family. Prominent expression is seen in the brain, lung and liver. It is also expressed in the heart and testis. A high level expression is seen in virtually all neurons (but not glia) in the postnatal and adult mouse brain and in neuroblasts of the cerebellar external granular layer.

Its function is as follows. Motor protein that may participate in process critical to neuronal development and function such as cell migration, neurite outgrowth and vesicular transport. The chain is Unconventional myosin-Ib (Myo1b) from Mus musculus (Mouse).